The primary structure comprises 245 residues: 5-oxoprolinase subunit A (245 aa).

It belongs to the LamB/PxpA family. Forms a complex composed of PxpA, PxpB and PxpC.

It carries out the reaction 5-oxo-L-proline + ATP + 2 H2O = L-glutamate + ADP + phosphate + H(+). Its function is as follows. Catalyzes the cleavage of 5-oxoproline to form L-glutamate coupled to the hydrolysis of ATP to ADP and inorganic phosphate. This is 5-oxoprolinase subunit A from Erwinia tasmaniensis (strain DSM 17950 / CFBP 7177 / CIP 109463 / NCPPB 4357 / Et1/99).